A 483-amino-acid chain; its full sequence is Replication factor C large subunit (483 aa).

44–51 (GSPGVGKT) contributes to the ATP binding site. Residues 415–483 (AVDHGGGIFA…DGQAGLSDFM (69 aa)) form a disordered region. Positions 430–443 (AQSDTESDDDDDGD) are enriched in acidic residues. Residues 451–463 (DEPKEESVNREQS) are compositionally biased toward basic and acidic residues.

This sequence belongs to the activator 1 small subunits family. RfcL subfamily. Heteromultimer composed of small subunits (RfcS) and large subunits (RfcL).

Functionally, part of the RFC clamp loader complex which loads the PCNA sliding clamp onto DNA. This Natronomonas pharaonis (strain ATCC 35678 / DSM 2160 / CIP 103997 / JCM 8858 / NBRC 14720 / NCIMB 2260 / Gabara) (Halobacterium pharaonis) protein is Replication factor C large subunit.